Here is a 214-residue protein sequence, read N- to C-terminus: Peptide methionine sulfoxide reductase B1, chloroplastic (214 aa).

Residues 1-53 constitute a chloroplast transit peptide; sequence MAMRQYAAATAASSSFRARPRARPSCLPAAALPLAPCCGVAWSRASYRRASVR. Over residues 58–81 the composition is skewed to low complexity; the sequence is ASSSSSSSSSSPSPQGQAQAQAQG. The disordered stretch occupies residues 58–91; the sequence is ASSSSSSSSSSPSPQGQAQAQAQGKPNYSTSLTD. In terms of domain architecture, MsrB spans 91-213; sequence DEEWRKRLTK…NSASLKLKKT (123 aa). The Zn(2+) site is built by Cys-130, Cys-133, Cys-179, and Cys-182. Catalysis depends on Cys-202, which acts as the Nucleophile.

Belongs to the MsrB Met sulfoxide reductase family. The cofactor is Zn(2+). As to expression, expressed in leaves and flowers.

It is found in the plastid. The protein resides in the chloroplast. The enzyme catalyses L-methionyl-[protein] + [thioredoxin]-disulfide + H2O = L-methionyl-(R)-S-oxide-[protein] + [thioredoxin]-dithiol. Catalyzes the reduction of methionine sulfoxide (MetSO) to methionine in proteins. Involved in abiotic stress response. Plays a protective role against oxidative stress by restoring activity to proteins that have been inactivated by methionine oxidation. MSRB family specifically reduces the MetSO R-enantiomer. The polypeptide is Peptide methionine sulfoxide reductase B1, chloroplastic (Oryza sativa subsp. japonica (Rice)).